We begin with the raw amino-acid sequence, 248 residues long: MKIDVLTLFPEMFQSPFEESIFKRAADKNLVRLEIHNFRDFSHDKHHAVDDTPYGGGAGMLLKPEPLFEAVEAVMEKDPTPAPVILLSPQGRTFNQSVARELANHQRLIIICGHYEGFDERVREHLATDEISIGDFVLTGGELAAMVVIDAVSRLIPGVLGSDDSSESDSHSNGLLEHPHYTRPPVFRGWDIPEVLLSGNHARIDRWRRKESLRRTLKRRPDMLEKITLSKADRKLIDEILAEENPKD.

S-adenosyl-L-methionine contacts are provided by residues glycine 113 and 133–138; that span reads IGDFVL.

It belongs to the RNA methyltransferase TrmD family. Homodimer.

Its subcellular location is the cytoplasm. The catalysed reaction is guanosine(37) in tRNA + S-adenosyl-L-methionine = N(1)-methylguanosine(37) in tRNA + S-adenosyl-L-homocysteine + H(+). Its function is as follows. Specifically methylates guanosine-37 in various tRNAs. The polypeptide is tRNA (guanine-N(1)-)-methyltransferase (Dehalococcoides mccartyi (strain ATCC BAA-2266 / KCTC 15142 / 195) (Dehalococcoides ethenogenes (strain 195))).